A 519-amino-acid chain; its full sequence is Membrane-bound lytic murein transglycosylase F (519 aa).

Positions 1–32 are cleaved as a signal peptide; sequence MKKLKLNYLLIGVVTLLLAVALWPAIPWSGKA. Positions 33–269 are non-LT domain; sequence DNRIAAIQAR…RLEEKYLGHG (237 aa). Residues 270–519 form an LT domain region; that stretch reads NDFDYVDTRS…PNTLSPVSPR (250 aa). The active site involves glutamate 314. Residues 495-519 form a disordered region; it reads PFSQAGAGGKTHSALPNTLSPVSPR. Over residues 508-519 the composition is skewed to polar residues; that stretch reads ALPNTLSPVSPR.

In the N-terminal section; belongs to the bacterial solute-binding protein 3 family. This sequence in the C-terminal section; belongs to the transglycosylase Slt family.

It localises to the cell outer membrane. The enzyme catalyses Exolytic cleavage of the (1-&gt;4)-beta-glycosidic linkage between N-acetylmuramic acid (MurNAc) and N-acetylglucosamine (GlcNAc) residues in peptidoglycan, from either the reducing or the non-reducing ends of the peptidoglycan chains, with concomitant formation of a 1,6-anhydrobond in the MurNAc residue.. Murein-degrading enzyme that degrades murein glycan strands and insoluble, high-molecular weight murein sacculi, with the concomitant formation of a 1,6-anhydromuramoyl product. Lytic transglycosylases (LTs) play an integral role in the metabolism of the peptidoglycan (PG) sacculus. Their lytic action creates space within the PG sacculus to allow for its expansion as well as for the insertion of various structures such as secretion systems and flagella. This chain is Membrane-bound lytic murein transglycosylase F, found in Cronobacter sakazakii (strain ATCC BAA-894) (Enterobacter sakazakii).